The chain runs to 425 residues: Serine--tRNA ligase (425 aa).

228–230 (TAE) contacts L-serine. 259 to 261 (RSE) is an ATP binding site. E282 contacts L-serine. Residue 346-349 (EIAS) participates in ATP binding. An L-serine-binding site is contributed by S382.

Belongs to the class-II aminoacyl-tRNA synthetase family. Type-1 seryl-tRNA synthetase subfamily. As to quaternary structure, homodimer. The tRNA molecule binds across the dimer.

It localises to the cytoplasm. The enzyme catalyses tRNA(Ser) + L-serine + ATP = L-seryl-tRNA(Ser) + AMP + diphosphate + H(+). The catalysed reaction is tRNA(Sec) + L-serine + ATP = L-seryl-tRNA(Sec) + AMP + diphosphate + H(+). It functions in the pathway aminoacyl-tRNA biosynthesis; selenocysteinyl-tRNA(Sec) biosynthesis; L-seryl-tRNA(Sec) from L-serine and tRNA(Sec): step 1/1. In terms of biological role, catalyzes the attachment of serine to tRNA(Ser). Is also able to aminoacylate tRNA(Sec) with serine, to form the misacylated tRNA L-seryl-tRNA(Sec), which will be further converted into selenocysteinyl-tRNA(Sec). The sequence is that of Serine--tRNA ligase from Rickettsia africae (strain ESF-5).